Here is a 539-residue protein sequence, read N- to C-terminus: Chaperone Ric-8A (539 aa).

Residues 506–539 (PMGVTSDGRLGPLDEAAQKMLQRQESSDLDSDSD) are disordered.

This sequence belongs to the synembryn family.

Its subcellular location is the cytoplasm. It localises to the cell cortex. Its function is as follows. Chaperone that specifically binds and folds nascent G alpha proteins prior to G protein heterotrimer formation, promoting their stability and activity: folds GNAI1, GNAO1, GNA13 and GNAQ. Does not fold G(s) G-alpha proteins GNAS nor GNAL. Also acts as a guanine nucleotide exchange factor (GEF) for G alpha proteins by stimulating exchange of bound GDP for free GTP. The sequence is that of Chaperone Ric-8A (ric8a) from Xenopus laevis (African clawed frog).